We begin with the raw amino-acid sequence, 434 residues long: RHOMBOID-like protein 9, chloroplastic (434 aa).

Residues 1–68 constitute a chloroplast transit peptide; sequence MALFPLHHEV…SPRRRLCLVR (68 aa). 8 helical membrane passes run 182–202, 209–229, 238–258, 267–287, 289–309, 326–346, 352–372, and 399–419; these read FYAV…EAAA, MGLL…ILAG, MFLH…LTFG, LFTF…MSFL, TADP…AWLV, LFQK…FGPI, LGAL…LQLG, and FLLF…IGDG.

The protein belongs to the peptidase S54 family.

It localises to the plastid. Its subcellular location is the chloroplast membrane. Probable rhomboid-type serine protease that catalyzes intramembrane proteolysis. This is RHOMBOID-like protein 9, chloroplastic from Arabidopsis thaliana (Mouse-ear cress).